The chain runs to 350 residues: Ribosomal RNA large subunit methyltransferase M (350 aa).

Residues 217 to 220 (APGG), aspartate 236, aspartate 256, and aspartate 272 contribute to the S-adenosyl-L-methionine site. Lysine 301 serves as the catalytic Proton acceptor.

Belongs to the class I-like SAM-binding methyltransferase superfamily. RNA methyltransferase RlmE family. RlmM subfamily. As to quaternary structure, monomer.

It localises to the cytoplasm. It carries out the reaction cytidine(2498) in 23S rRNA + S-adenosyl-L-methionine = 2'-O-methylcytidine(2498) in 23S rRNA + S-adenosyl-L-homocysteine + H(+). In terms of biological role, catalyzes the 2'-O-methylation at nucleotide C2498 in 23S rRNA. This chain is Ribosomal RNA large subunit methyltransferase M, found in Cellvibrio japonicus (strain Ueda107) (Pseudomonas fluorescens subsp. cellulosa).